The sequence spans 128 residues: Small ribosomal subunit protein uS8c (128 aa).

This sequence belongs to the universal ribosomal protein uS8 family. Part of the 30S ribosomal subunit.

The protein resides in the plastid. It localises to the chloroplast. Its function is as follows. One of the primary rRNA binding proteins, it binds directly to 16S rRNA central domain where it helps coordinate assembly of the platform of the 30S subunit. This Gnetum parvifolium (Small-leaved jointfir) protein is Small ribosomal subunit protein uS8c (rps8).